A 1050-amino-acid chain; its full sequence is MDS1 and EVI1 complex locus protein EVI1-B (1050 aa).

C2H2-type zinc fingers lie at residues 21 to 48 (YHCE…GTPH), 75 to 97 (HECK…LLSH), and 103 to 125 (YKCD…QMSH). The C2H2-type 4; degenerate zinc-finger motif lies at 131-155 (YECENCSKQVFTDPSNLQRHIRSQH). 2 consecutive C2H2-type zinc fingers follow at residues 161–183 (HACS…KHIH) and 189–211 (FVCE…KRMH). Residues 218–240 (IKCKDCGQMFSTTSSLNKHRRFC) form a C2H2-type 7; atypical zinc finger. Disordered stretches follow at residues 371 to 421 (ITEN…SDKD) and 529 to 612 (PLKV…EKKD). Basic and acidic residues predominate over residues 379–390 (RPHEKVSDHSES). Residues 397–411 (STPSGSDLETTSGSD) show a composition bias toward polar residues. Positions 420 to 433 (KDKLKENGKLYKDK) match the Nuclear localization signal motif. The segment covering 529–542 (PLKVEPESPKESKK) has biased composition (basic and acidic residues). A CTBP-binding motif 1 motif is present at residues 551-555 (AFDLT). Residues 564–576 (SPNAPSKSSAPTS) show a composition bias toward low complexity. Positions 582–586 (PLDLS) match the CTBP-binding motif 2 motif. Positions 588–598 (GSRSRATTTKQ) are enriched in polar residues. Positions 599–612 (TESRKNHIFGEKKD) are enriched in basic and acidic residues. C2H2-type zinc fingers lie at residues 731–753 (YTCR…LRTH), 759–782 (YRCK…RNIH), and 788–810 (FKCH…LKKH). A disordered region spans residues 928 to 951 (KSEVNCKVSPSRHDDDDDDEEEDF).

Homooligomer. Interacts with ctbp.

The protein localises to the nucleus. It is found in the nucleus speckle. Transcriptional repressor during pronephros development. Plays a role in regionalization of the pronephros; may promote formation of the distal tubule and duct over formation of the glomus and proximal tubule. In Xenopus laevis (African clawed frog), this protein is MDS1 and EVI1 complex locus protein EVI1-B (mecom-b).